The primary structure comprises 60 residues: Large ribosomal subunit protein uL30 (60 aa).

The protein belongs to the universal ribosomal protein uL30 family. Part of the 50S ribosomal subunit.

The sequence is that of Large ribosomal subunit protein uL30 from Ralstonia pickettii (strain 12J).